The chain runs to 248 residues: Transcription factor bHLH35 (248 aa).

A compositionally biased stretch (low complexity) spans 37 to 54; sequence SGSYDSSSPDGAASSPAS. The disordered stretch occupies residues 37–60; the sequence is SGSYDSSSPDGAASSPASKNIVSE. A bHLH domain is found at 51–100; that stretch reads SPASKNIVSERNRRQKLNQRLFALRSVVPNITKMDKASIIKDAISYIEGL.

As to quaternary structure, homodimer. In terms of tissue distribution, expressed constitutively in roots, leaves, stems, and flowers.

It localises to the nucleus. The polypeptide is Transcription factor bHLH35 (BHLH35) (Arabidopsis thaliana (Mouse-ear cress)).